A 175-amino-acid polypeptide reads, in one-letter code: Large ribosomal subunit protein uL10 (175 aa).

Belongs to the universal ribosomal protein uL10 family. As to quaternary structure, part of the ribosomal stalk of the 50S ribosomal subunit. The N-terminus interacts with L11 and the large rRNA to form the base of the stalk. The C-terminus forms an elongated spine to which L12 dimers bind in a sequential fashion forming a multimeric L10(L12)X complex.

Its function is as follows. Forms part of the ribosomal stalk, playing a central role in the interaction of the ribosome with GTP-bound translation factors. This chain is Large ribosomal subunit protein uL10, found in Prochlorococcus marinus (strain MIT 9301).